The primary structure comprises 207 residues: LexA repressor (207 aa).

Residues 28 to 48 (VREIGEAVGLASSSTVHGHLS) constitute a DNA-binding region (H-T-H motif). Residues serine 130 and lysine 168 each act as for autocatalytic cleavage activity in the active site.

This sequence belongs to the peptidase S24 family. As to quaternary structure, homodimer.

The enzyme catalyses Hydrolysis of Ala-|-Gly bond in repressor LexA.. Functionally, represses a number of genes involved in the response to DNA damage (SOS response), including recA and lexA. In the presence of single-stranded DNA, RecA interacts with LexA causing an autocatalytic cleavage which disrupts the DNA-binding part of LexA, leading to derepression of the SOS regulon and eventually DNA repair. This is LexA repressor from Staphylococcus aureus (strain Mu3 / ATCC 700698).